A 211-amino-acid polypeptide reads, in one-letter code: tRNA (guanine-N(7)-)-methyltransferase (211 aa).

Positions 44, 69, 96, and 118 each coordinate S-adenosyl-L-methionine. Asp-118 is an active-site residue. Substrate is bound at residue Lys-122. Residues 124 to 129 (RHEKRR) form an interaction with RNA region. Residues Asp-154 and 191 to 194 (TEYE) contribute to the substrate site.

This sequence belongs to the class I-like SAM-binding methyltransferase superfamily. TrmB family.

The enzyme catalyses guanosine(46) in tRNA + S-adenosyl-L-methionine = N(7)-methylguanosine(46) in tRNA + S-adenosyl-L-homocysteine. It functions in the pathway tRNA modification; N(7)-methylguanine-tRNA biosynthesis. In terms of biological role, catalyzes the formation of N(7)-methylguanine at position 46 (m7G46) in tRNA. This is tRNA (guanine-N(7)-)-methyltransferase from Streptococcus pneumoniae (strain CGSP14).